A 537-amino-acid polypeptide reads, in one-letter code: O-phosphoserine--tRNA(Cys) ligase (537 aa).

Residues 186–188 (HMT), 231–233 (SAS), 273–274 (YY), and asparagine 317 each bind substrate.

It belongs to the class-II aminoacyl-tRNA synthetase family. O-phosphoseryl-tRNA(Cys) synthetase subfamily. Homotetramer. Interacts with SepCysS.

It catalyses the reaction tRNA(Cys) + O-phospho-L-serine + ATP = O-phospho-L-seryl-tRNA(Cys) + AMP + diphosphate. In terms of biological role, catalyzes the attachment of O-phosphoserine (Sep) to tRNA(Cys). The protein is O-phosphoserine--tRNA(Cys) ligase of Methanococcus maripaludis (strain DSM 14266 / JCM 13030 / NBRC 101832 / S2 / LL).